A 216-amino-acid polypeptide reads, in one-letter code: Probable GH family 25 lysozyme 5 (216 aa).

A signal peptide spans methionine 1 to serine 20. A Ch-type lysozyme domain is found at histidine 21–glutamate 216. Aspartate 25 is a catalytic residue. A glycan (N-linked (GlcNAc...) asparagine) is linked at asparagine 31. Active-site residues include aspartate 113 and glutamate 115.

This sequence belongs to the glycosyl hydrolase 25 family.

The protein resides in the secreted. It catalyses the reaction Hydrolysis of (1-&gt;4)-beta-linkages between N-acetylmuramic acid and N-acetyl-D-glucosamine residues in a peptidoglycan and between N-acetyl-D-glucosamine residues in chitodextrins.. In Dictyostelium discoideum (Social amoeba), this protein is Probable GH family 25 lysozyme 5.